The chain runs to 394 residues: 1-deoxy-D-xylulose 5-phosphate reductoisomerase (394 aa).

Residues Thr13, Gly14, Ser15, Ile16, and Asn127 each coordinate NADPH. Lys128 is a 1-deoxy-D-xylulose 5-phosphate binding site. Glu129 provides a ligand contact to NADPH. Asp153 contacts Mn(2+). Positions 154, 155, 184, and 207 each coordinate 1-deoxy-D-xylulose 5-phosphate. Mn(2+) is bound at residue Glu155. Position 213 (Gly213) interacts with NADPH. 1-deoxy-D-xylulose 5-phosphate contacts are provided by Ser220, Asn225, Lys226, and Glu229. Glu229 provides a ligand contact to Mn(2+).

This sequence belongs to the DXR family. Mg(2+) is required as a cofactor. It depends on Mn(2+) as a cofactor.

It catalyses the reaction 2-C-methyl-D-erythritol 4-phosphate + NADP(+) = 1-deoxy-D-xylulose 5-phosphate + NADPH + H(+). It functions in the pathway isoprenoid biosynthesis; isopentenyl diphosphate biosynthesis via DXP pathway; isopentenyl diphosphate from 1-deoxy-D-xylulose 5-phosphate: step 1/6. Functionally, catalyzes the NADPH-dependent rearrangement and reduction of 1-deoxy-D-xylulose-5-phosphate (DXP) to 2-C-methyl-D-erythritol 4-phosphate (MEP). The protein is 1-deoxy-D-xylulose 5-phosphate reductoisomerase of Ectopseudomonas mendocina (strain ymp) (Pseudomonas mendocina).